The primary structure comprises 649 residues: Acid beta-fructofuranosidase (649 aa).

The Cytoplasmic segment spans residues 1 to 22 (MEHHKPLLPTSSHAAPTSSTRK). Residues 1 to 101 (MEHHKPLLPT…NLLFAGEGGA (101 aa)) constitute a propeptide, removed in mature form. The chain crosses the membrane as a helical; Signal-anchor for type II membrane protein span at residues 23–43 (DLLFVLCGLLFLSSLVAYGGY). Over 44–649 (RASGVPHAHL…PFPFNPDQKS (606 aa)) the chain is Lumenal. The segment at 52–75 (HLSSPTSNHQQDHQSPTSLPSSKW) is disordered. The span at 54–72 (SSPTSNHQQDHQSPTSLPS) shows a compositional bias: polar residues. Substrate-binding positions include 127–130 (WMND), Gln146, Trp154, and 189–190 (WT). Asp130 is a catalytic residue. An N-linked (GlcNAc...) (complex) asparagine glycan is attached at Asn210. 253–254 (RD) provides a ligand contact to substrate. The N-linked (GlcNAc...) (complex) asparagine glycan is linked to Asn275. The substrate site is built by Glu308 and Asp341. A disulfide bridge links Cys498 with Cys546. The N-linked (GlcNAc...) (high mannose) asparagine glycan is linked to Asn618.

The protein belongs to the glycosyl hydrolase 32 family. Present in two forms, a 70 kDa monomer and a heterodimer of the 30 kDa and 38 kDa subunits. The ratio of the levels of the two forms within cells appears to be regulated developmentally.

It localises to the membrane. It is found in the vacuole lumen. The catalysed reaction is Hydrolysis of terminal non-reducing beta-D-fructofuranoside residues in beta-D-fructofuranosides.. It functions in the pathway glycan biosynthesis; sucrose metabolism. Possible role in the continued mobilization of sucrose to sink organs. The polypeptide is Acid beta-fructofuranosidase (INVA) (Vigna radiata var. radiata (Mung bean)).